A 120-amino-acid chain; its full sequence is Small ribosomal subunit protein bS16 (120 aa).

The interval Gly-81 to Ala-120 is disordered. Over residues Glu-95–Lys-110 the composition is skewed to basic and acidic residues. Over residues Ala-111 to Ala-120 the composition is skewed to low complexity.

This sequence belongs to the bacterial ribosomal protein bS16 family.

This Methylobacterium radiotolerans (strain ATCC 27329 / DSM 1819 / JCM 2831 / NBRC 15690 / NCIMB 10815 / 0-1) protein is Small ribosomal subunit protein bS16.